Consider the following 296-residue polypeptide: Acetylglutamate kinase (296 aa).

Substrate is bound by residues 69-70, Arg-91, and Asn-193; that span reads GG.

This sequence belongs to the acetylglutamate kinase family. ArgB subfamily.

It is found in the cytoplasm. The enzyme catalyses N-acetyl-L-glutamate + ATP = N-acetyl-L-glutamyl 5-phosphate + ADP. Its pathway is amino-acid biosynthesis; L-arginine biosynthesis; N(2)-acetyl-L-ornithine from L-glutamate: step 2/4. Its function is as follows. Catalyzes the ATP-dependent phosphorylation of N-acetyl-L-glutamate. The protein is Acetylglutamate kinase of Albidiferax ferrireducens (strain ATCC BAA-621 / DSM 15236 / T118) (Rhodoferax ferrireducens).